We begin with the raw amino-acid sequence, 864 residues long: Sine oculis-binding protein homolog (864 aa).

A compositionally biased stretch (basic and acidic residues) spans 1-14 (MAEMEKEGRPPENK). The interval 1–25 (MAEMEKEGRPPENKRSRKPAHPVKR) is disordered. FCS-type zinc fingers lie at residues 142–180 (DEVS…KCFA) and 216–256 (FKNN…KCLN). 3 disordered regions span residues 304-360 (LTDA…ETPS), 413-484 (RGPP…PGAP), and 550-616 (KPPN…RGRG). Low complexity-rich tracts occupy residues 314 to 335 (PVAA…VSPS) and 417 to 433 (HHAS…MLPG). Residues 460–484 (IHPPSTPTMPGNPPGLLPPPPPGAP) show a composition bias toward pro residues. 2 stretches are compositionally biased toward low complexity: residues 565–582 (SAPG…GRSL) and 590–603 (GSSK…GSSG). An SUMO interaction motif 1 (SIM); mediates the binding to polysumoylated substrates motif is present at residues 618 to 622 (VVDLT). Ser-627 is modified (phosphoserine). The SUMO interaction motif 2 (SIM); mediates the binding to polysumoylated substrates motif lies at 648 to 652 (VIDLT). A Glycyl lysine isopeptide (Lys-Gly) (interchain with G-Cter in SUMO2) cross-link involves residue Lys-672. The residue at position 694 (Ser-694) is a Phosphoserine. The tract at residues 725 to 750 (APAEAKGAEPPPEQPPPPAPPKKLLS) is disordered. Residues 733 to 745 (EPPPEQPPPPAPP) are compositionally biased toward pro residues.

Belongs to the SOBP family. Interacts (via SIM domains) with SUMO1 and SUMO2.

In terms of biological role, implicated in development of the cochlea. The sequence is that of Sine oculis-binding protein homolog from Rattus norvegicus (Rat).